Reading from the N-terminus, the 276-residue chain is Sulfur carrier protein FdhD (276 aa).

Cysteine 122 functions as the Cysteine persulfide intermediate in the catalytic mechanism. Position 259 to 264 (259 to 264 (FCKPGK)) interacts with Mo-bis(molybdopterin guanine dinucleotide).

This sequence belongs to the FdhD family.

It localises to the cytoplasm. Functionally, required for formate dehydrogenase (FDH) activity. Acts as a sulfur carrier protein that transfers sulfur from IscS to the molybdenum cofactor prior to its insertion into FDH. The sequence is that of Sulfur carrier protein FdhD from Photorhabdus laumondii subsp. laumondii (strain DSM 15139 / CIP 105565 / TT01) (Photorhabdus luminescens subsp. laumondii).